Here is a 108-residue protein sequence, read N- to C-terminus: MRDMMSMMKKAKEIQEKMQQIQEEMTNLQMIGTAGGGLINVTLNGKNTITAIKIDPSLLKPEESEILEDLIMAAHNDAKTKIEIAMEEKTKSMTAGLPLPSGFKFPFS.

This sequence belongs to the YbaB/EbfC family. Homodimer.

It is found in the cytoplasm. The protein resides in the nucleoid. Binds to DNA and alters its conformation. May be involved in regulation of gene expression, nucleoid organization and DNA protection. This Bartonella quintana (strain Toulouse) (Rochalimaea quintana) protein is Nucleoid-associated protein BQ02190.